A 498-amino-acid polypeptide reads, in one-letter code: Neoxanthin synthase, chloroplastic (498 aa).

The N-terminal 33 residues, 1–33 (METLLKPLTSLLLSSPTPHRSIFQQNPPSLNPT), are a transit peptide targeting the chloroplast. The segment at 16-38 (PTPHRSIFQQNPPSLNPTTKKKS) is disordered. Residues 22 to 33 (IFQQNPPSLNPT) show a composition bias toward polar residues. 84 to 112 (VIIIGAGPAGLRLAEHVSKYGIKVCCVDP) lines the NAD(+) pocket.

The protein belongs to the lycopene cyclase family.

It is found in the plastid. Its subcellular location is the chloroplast. It catalyses the reaction all-trans-violaxanthin = all-trans-neoxanthin. The protein operates within carotenoid biosynthesis; neoxanthin biosynthesis. In terms of biological role, involved in the synthesis of neoxanthin, the last product of carotenoid synthesis and a precursor of abscisic acid. This is Neoxanthin synthase, chloroplastic (NXS) from Solanum tuberosum (Potato).